A 160-amino-acid polypeptide reads, in one-letter code: 6,7-dimethyl-8-ribityllumazine synthase (160 aa).

5-amino-6-(D-ribitylamino)uracil contacts are provided by residues phenylalanine 28, 62-64, and 86-88; these read ALE and AVI. Position 91–92 (91–92) interacts with (2S)-2-hydroxy-3-oxobutyl phosphate; that stretch reads ET. The active-site Proton donor is the histidine 94. Asparagine 119 contacts 5-amino-6-(D-ribitylamino)uracil. Position 133 (arginine 133) interacts with (2S)-2-hydroxy-3-oxobutyl phosphate.

It belongs to the DMRL synthase family.

The catalysed reaction is (2S)-2-hydroxy-3-oxobutyl phosphate + 5-amino-6-(D-ribitylamino)uracil = 6,7-dimethyl-8-(1-D-ribityl)lumazine + phosphate + 2 H2O + H(+). Its pathway is cofactor biosynthesis; riboflavin biosynthesis; riboflavin from 2-hydroxy-3-oxobutyl phosphate and 5-amino-6-(D-ribitylamino)uracil: step 1/2. In terms of biological role, catalyzes the formation of 6,7-dimethyl-8-ribityllumazine by condensation of 5-amino-6-(D-ribitylamino)uracil with 3,4-dihydroxy-2-butanone 4-phosphate. This is the penultimate step in the biosynthesis of riboflavin. The sequence is that of 6,7-dimethyl-8-ribityllumazine synthase from Nitrosospira multiformis (strain ATCC 25196 / NCIMB 11849 / C 71).